A 448-amino-acid polypeptide reads, in one-letter code: Probable glucuronoxylan glucuronosyltransferase IRX7 (448 aa).

Over 1 to 16 the chain is Cytoplasmic; sequence MTTHKHRRTEKNLCFK. Residues 17 to 37 form a helical; Signal-anchor for type II membrane protein membrane-spanning segment; it reads QYYKWILCFILTLYFFASFFV. Residues 38–448 lie on the Lumenal side of the membrane; it reads DHDQDHRSST…RSVRRSNSFL (411 aa). Residues asparagine 157, asparagine 189, asparagine 287, asparagine 397, and asparagine 438 are each glycosylated (N-linked (GlcNAc...) asparagine).

Belongs to the glycosyltransferase 47 family. In terms of tissue distribution, expressed in developing interfascicular fibers and xylem cells in stems and developing secondary xylem in roots.

It localises to the golgi apparatus membrane. Involved in the synthesis of the hemicellulose glucuronoxylan, a major component of secondary cell walls. Probably involved in the synthesis of the glycosyl sequence at the glucuronoxylan reducing end. The sequence is that of Probable glucuronoxylan glucuronosyltransferase IRX7 (IRX7) from Arabidopsis thaliana (Mouse-ear cress).